The sequence spans 60 residues: Large ribosomal subunit protein uL30 (60 aa).

The protein belongs to the universal ribosomal protein uL30 family. Part of the 50S ribosomal subunit.

This Salinispora tropica (strain ATCC BAA-916 / DSM 44818 / JCM 13857 / NBRC 105044 / CNB-440) protein is Large ribosomal subunit protein uL30.